The chain runs to 611 residues: Developmental and secondary metabolism regulator veA (611 aa).

Disordered regions lie at residues 1 to 57 (MNRK…RPVD), 222 to 497 (RRRE…ASFD), and 511 to 611 (LEAS…PGHA). The span at 14-23 (KSSATRTTND) shows a compositional bias: polar residues. One can recognise a Velvet domain in the interval 24 to 216 (GRAITYEMQV…AEQGCRVRIR (193 aa)). Residues 38-43 (QRARAC) carry the Nuclear localization signal motif. Residues 242-254 (AARARASATPDPS) are compositionally biased toward low complexity. Positions 274 to 290 (SASNASHQSLGSISRRP) are enriched in polar residues. A compositionally biased stretch (low complexity) spans 330–340 (YPPNQFVQQQP). Residues 341 to 361 (PMQPPLPQYQPPNYPAPPPPV) are compositionally biased toward pro residues. The span at 362 to 377 (TAAQQPQPAQSYYNYP) shows a compositional bias: low complexity. A compositionally biased stretch (polar residues) spans 419–434 (RNSQQIPPTSQPTAYT). Composition is skewed to low complexity over residues 435–452 (QPMQ…QHYQ) and 461–471 (QASQHSSYSSM). Residues 455 to 499 (PPPPPSQASQHSSYSSMDLYNSRPAPIEPHHHGNTPASKASFDLP) form a PEST region. The span at 511–533 (LEASSPTSVAPTNAYFSGGQTPI) shows a compositional bias: polar residues.

The protein belongs to the velvet family. VeA subfamily. In terms of assembly, component of the heterotrimeric velvet complex composed of laeA, veA and velB; VeA acting as a bridging protein between laeA and velB.

Its subcellular location is the nucleus. The protein localises to the cytoplasm. Its function is as follows. Component of the velvet transcription factor complex that controls sexual/asexual developmental ratio in response to light, promoting sexual development in the darkness while stimulating asexual sporulation under illumination. The velvet complex hat acts as a global regulator for secondary metabolite gene expression. Controls the expression of the dothistromin gene cluster. Regulates hyphal growth and pigment formation. Acts as a positive regulator of virulence. The polypeptide is Developmental and secondary metabolism regulator veA (Dothistroma septosporum (strain NZE10 / CBS 128990) (Red band needle blight fungus)).